The primary structure comprises 431 residues: 3-deoxy-D-manno-octulosonic acid transferase (431 aa).

The helical; Signal-anchor transmembrane segment at 5 to 27 (WLTSRLYDAFLVCAFFVSAPRIF) threads the bilayer. Glu-67 functions as the Proton acceptor in the catalytic mechanism. Residues 275-276 (PR), 315-317 (MGV), and 342-345 (NLLE) each bind CMP.

It belongs to the glycosyltransferase group 1 family. Glycosyltransferase 30 subfamily.

Its subcellular location is the cell inner membrane. The catalysed reaction is lipid IVA (E. coli) + CMP-3-deoxy-beta-D-manno-octulosonate = alpha-Kdo-(2-&gt;6)-lipid IVA (E. coli) + CMP + H(+). It catalyses the reaction alpha-Kdo-(2-&gt;6)-lipid IVA (E. coli) + CMP-3-deoxy-beta-D-manno-octulosonate = alpha-Kdo-(2-&gt;4)-alpha-Kdo-(2-&gt;6)-lipid IVA (E. coli) + CMP + H(+). The enzyme catalyses alpha-Kdo-(2-&gt;4)-alpha-Kdo-(2-&gt;6)-lipid IVA (E. coli) + CMP-3-deoxy-beta-D-manno-octulosonate = alpha-Kdo-(2-&gt;8)-alpha-Kdo-(2-&gt;4)-alpha-Kdo-(2-&gt;6)-lipid IVA (E. coli) + CMP + H(+). It functions in the pathway bacterial outer membrane biogenesis; LPS core biosynthesis. In terms of biological role, involved in lipopolysaccharide (LPS) biosynthesis. Catalyzes the transfer of three 3-deoxy-D-manno-octulosonate (Kdo) residues from CMP-Kdo to lipid IV(A), the tetraacyldisaccharide-1,4'-bisphosphate precursor of lipid A. Thus generates the genus-specific LPS epitope of Chlamydia, composed of the trisaccharide alpha-Kdo-(2-&gt;8)-alpha-Kdo-(2-&gt;4)-alpha-Kdo. This is 3-deoxy-D-manno-octulosonic acid transferase (waaA) from Chlamydia trachomatis serovar A (strain ATCC VR-571B / DSM 19440 / HAR-13).